The chain runs to 257 residues: 5-oxoprolinase subunit A (257 aa).

Belongs to the LamB/PxpA family. As to quaternary structure, forms a complex composed of PxpA, PxpB and PxpC.

The enzyme catalyses 5-oxo-L-proline + ATP + 2 H2O = L-glutamate + ADP + phosphate + H(+). Its function is as follows. Catalyzes the cleavage of 5-oxoproline to form L-glutamate coupled to the hydrolysis of ATP to ADP and inorganic phosphate. In Halalkalibacterium halodurans (strain ATCC BAA-125 / DSM 18197 / FERM 7344 / JCM 9153 / C-125) (Bacillus halodurans), this protein is 5-oxoprolinase subunit A.